The sequence spans 410 residues: Gamma-glutamyl phosphate reductase (410 aa).

Belongs to the gamma-glutamyl phosphate reductase family.

The protein resides in the cytoplasm. The catalysed reaction is L-glutamate 5-semialdehyde + phosphate + NADP(+) = L-glutamyl 5-phosphate + NADPH + H(+). The protein operates within amino-acid biosynthesis; L-proline biosynthesis; L-glutamate 5-semialdehyde from L-glutamate: step 2/2. Catalyzes the NADPH-dependent reduction of L-glutamate 5-phosphate into L-glutamate 5-semialdehyde and phosphate. The product spontaneously undergoes cyclization to form 1-pyrroline-5-carboxylate. The sequence is that of Gamma-glutamyl phosphate reductase from Sulfurimonas denitrificans (strain ATCC 33889 / DSM 1251) (Thiomicrospira denitrificans (strain ATCC 33889 / DSM 1251)).